The chain runs to 426 residues: Serine--tRNA ligase (426 aa).

231–233 contacts L-serine; that stretch reads TSE. 262–264 provides a ligand contact to ATP; sequence RSE. Position 285 (Glu-285) interacts with L-serine. 349 to 352 contacts ATP; that stretch reads EISS. Ser-385 provides a ligand contact to L-serine.

Belongs to the class-II aminoacyl-tRNA synthetase family. Type-1 seryl-tRNA synthetase subfamily. As to quaternary structure, homodimer. The tRNA molecule binds across the dimer.

It is found in the cytoplasm. It carries out the reaction tRNA(Ser) + L-serine + ATP = L-seryl-tRNA(Ser) + AMP + diphosphate + H(+). It catalyses the reaction tRNA(Sec) + L-serine + ATP = L-seryl-tRNA(Sec) + AMP + diphosphate + H(+). It functions in the pathway aminoacyl-tRNA biosynthesis; selenocysteinyl-tRNA(Sec) biosynthesis; L-seryl-tRNA(Sec) from L-serine and tRNA(Sec): step 1/1. Its function is as follows. Catalyzes the attachment of serine to tRNA(Ser). Is also able to aminoacylate tRNA(Sec) with serine, to form the misacylated tRNA L-seryl-tRNA(Sec), which will be further converted into selenocysteinyl-tRNA(Sec). The polypeptide is Serine--tRNA ligase (Legionella pneumophila (strain Corby)).